Reading from the N-terminus, the 678-residue chain is Endopolyphosphatase (678 aa).

Residues 1–2 (MR) are Cytoplasmic-facing. Residues 3–23 (SPLLASLFALALSIASSEAAI) traverse the membrane as a helical; Signal-anchor for type II membrane protein segment. Topologically, residues 24-678 (SSTEQVPLSG…ELMLVSTETD (655 aa)) are vacuolar. A disordered region spans residues 70-109 (YKTGSTFDSGCHRKPKKDGKSEGKKATENERGNEDLDDKE). Over residues 87–103 (DGKSEGKKATENERGNE) the composition is skewed to basic and acidic residues. 3 N-linked (GlcNAc...) asparagine glycosylation sites follow: N138, N369, and N447. Residues 504–547 (KGSGGHRHDVPKGDCSLPSNEDKPHCTFKRKPRHYSKRSPSRTN) are disordered. Positions 529 to 543 (CTFKRKPRHYSKRSP) are enriched in basic residues. 2 N-linked (GlcNAc...) asparagine glycosylation sites follow: N591 and N616.

Belongs to the endopolyphosphatase PPN1 family. It depends on a divalent metal cation as a cofactor. Post-translationally, processing by proteases in the vacuole may be required for activation.

Its subcellular location is the vacuole membrane. The catalysed reaction is [phosphate](n+1) + n H2O = (n+1) phosphate + n H(+). Its function is as follows. Catalyzes the hydrolysis of inorganic polyphosphate (polyP) chains of many hundreds of phosphate residues into shorter lengths. This is Endopolyphosphatase (PPN1) from Cryptococcus neoformans var. neoformans serotype D (strain JEC21 / ATCC MYA-565) (Filobasidiella neoformans).